The sequence spans 815 residues: Probable oligoxyloglucan-reducing end-specific xyloglucanase (815 aa).

The signal sequence occupies residues 1–19 (MKFWLQQLGLAVLCASSAA). Asp58 serves as the catalytic Nucleophile. Asn113 carries N-linked (GlcNAc...) asparagine glycosylation. The BNR 1 repeat unit spans residues 118–128 (FVSNDRGATFT). N-linked (GlcNAc...) asparagine glycosylation is present at Asn180. One copy of the BNR 2 repeat lies at 218–228 (YYTTDGGKNWE). N-linked (GlcNAc...) asparagine glycans are attached at residues Asn246, Asn290, and Asn304. The stretch at 351-361 (YLSRDGGKTWK) is one BNR 3 repeat. N-linked (GlcNAc...) asparagine glycosylation occurs at Asn387. The Proton donor role is filled by Asp489. One copy of the BNR 4 repeat lies at 545-555 (YSTDGGSEWTK). N-linked (GlcNAc...) asparagine glycans are attached at residues Asn564 and Asn603. Residues 649–658 (YVSTDGGLSY) form a BNR 5 repeat. The N-linked (GlcNAc...) asparagine glycan is linked to Asn662. BNR repeat units lie at residues 696–706 (YHTTDFGKRWK) and 749–759 (YRSDDNGSTWD). An N-linked (GlcNAc...) asparagine glycan is attached at Asn754.

This sequence belongs to the glycosyl hydrolase 74 family.

The protein localises to the secreted. It catalyses the reaction Hydrolysis of cellobiose from the reducing end of xyloglucans consisting of a beta-(1-&gt;4)-linked glucan carrying alpha-D-xylosyl groups on O-6 of the glucose residues. To be a substrate, the first residue must be unsubstituted, the second residue may bear a xylosyl group, whether further glycosylated or not, and the third residue, which becomes the new terminus by the action of the enzyme, is preferably xylosylated, but this xylose residue must not be further substituted.. Functionally, oligoxyloglucan-reducing end-specific xyloglucanase involved in degradation of xyloglucans. Releases the first two glycosyl segments from oligoxyloglucans. Active against cotton xyloglucan, tamarind xyloglucan and tamarind xyloglucan oligomers. The chain is Probable oligoxyloglucan-reducing end-specific xyloglucanase (xgcA) from Neosartorya fischeri (strain ATCC 1020 / DSM 3700 / CBS 544.65 / FGSC A1164 / JCM 1740 / NRRL 181 / WB 181) (Aspergillus fischerianus).